Reading from the N-terminus, the 203-residue chain is Thymidylate kinase (203 aa).

14–21 (GMDGIGKS) is a binding site for ATP.

The protein belongs to the thymidylate kinase family.

The catalysed reaction is dTMP + ATP = dTDP + ADP. Functionally, phosphorylation of dTMP to form dTDP in both de novo and salvage pathways of dTTP synthesis. The protein is Thymidylate kinase of Rickettsia typhi (strain ATCC VR-144 / Wilmington).